A 336-amino-acid chain; its full sequence is Putative transcription factor avaE (336 aa).

Residues 32-100 (TATRLNQTTF…VPLDQNESMP (69 aa)) constitute a DNA-binding region (WRKY).

The protein resides in the nucleus. The protein operates within secondary metabolite biosynthesis. Its function is as follows. Putative transcription factor; part of the cluster that mediates the biosynthesis of a highly modified cyclo-arginine-tryptophan dipeptide (cRW). The polypeptide is Putative transcription factor avaE (Aspergillus versicolor).